Here is a 67-residue protein sequence, read N- to C-terminus: Moricin (67 aa).

The signal sequence occupies residues 1–23 (MKLTSLFIFVIVALSLLFSSTDA).

The protein belongs to the moricin family. Monomer.

The protein resides in the secreted. Antimicrobial peptide. Active against a broad spectrum of Gram-positive and Gram-negative bacteria including methicillin-resistant S.aureus ATCC 43 300, S.aureus BAA-39, pathogenic strains of L.monocytogenes, K.pneumoniae, E.coli O157:H7, S.typhimurium and multidrug-resistant S.typhimurium DT104 with minimum inhibitory concentration (MIC) of 1.4 uM for all except for S.aureus BAA-39. Also active against Serratia marcescens. Probably acts by disturbing membrane functions with its amphipathic alpha-helical structure. May protect a developing embryo from bacterial infection. The polypeptide is Moricin (Manduca sexta (Tobacco hawkmoth)).